A 404-amino-acid chain; its full sequence is 26S proteasome regulatory subunit 6A-B (404 aa).

192–199 (GPPGTGKT) contacts ATP.

This sequence belongs to the AAA ATPase family. May form a heterodimer with a related family member.

It is found in the cytoplasm. The protein resides in the nucleus. Its function is as follows. The 26S proteasome is involved in the ATP-dependent degradation of ubiquitinated proteins. The regulatory (or ATPase) complex confers ATP dependency and substrate specificity to the 26S complex. This is 26S proteasome regulatory subunit 6A-B (psmc3-b) from Xenopus laevis (African clawed frog).